The following is a 336-amino-acid chain: Serpentine receptor class alpha-10 (336 aa).

Over 1 to 28 (MGPITANSSKCATEDQMILQTSLLLRIN) the chain is Extracellular. The chain crosses the membrane as a helical span at residues 29–49 (VIIMTIVAIITFILTYKALFI). The Cytoplasmic portion of the chain corresponds to 50 to 61 (LKIRPIFHSSTK). The helical transmembrane segment at 62–82 (ILLYTSLLFVNVHAVIFMVIQ) threads the bilayer. The Extracellular segment spans residues 83-107 (NTALIRSFTLSDKPCEIMRTTLECR). Residues 108–128 (FQNHVLIFGIAGVNFNQFGLT) traverse the membrane as a helical segment. Residues 129–148 (VDRLLATIIPQSYSHMGALP) lie on the Cytoplasmic side of the membrane. The helical transmembrane segment at 149 to 169 (GVILSVLVVACSIAAPLIIAI) threads the bilayer. Topologically, residues 170-192 (GDPYDDIVPNCFFFPEHSAPRAN) are extracellular. Residues 193 to 213 (IFLVTLSTLVITSIFLNFIII) traverse the membrane as a helical segment. The Cytoplasmic portion of the chain corresponds to 214–243 (YANKKLEKGCRTRFYVTQRYQKREALISTR). Residues 244–264 (IISYIAASQFLGLTLYSTMVL) traverse the membrane as a helical segment. At 265–280 (TLRLHKSMIPISIYHN) the chain is on the extracellular side. The helical transmembrane segment at 281-301 (MVWWAYTVPFAAVSLPALLIY) threads the bilayer. At 302-336 (RINQVGSNRKRVINRITAKVETQEEHMKSLKELWA) the chain is on the cytoplasmic side.

This sequence belongs to the nematode receptor-like protein sra family. As to expression, expressed in the URX sensory neuron, the ALA interneuron and in additional interneurons, pharyngeal neurons and muscle.

It is found in the membrane. This Caenorhabditis elegans protein is Serpentine receptor class alpha-10 (sra-10).